Consider the following 487-residue polypeptide: 3-octaprenyl-4-hydroxybenzoate carboxy-lyase (487 aa).

Residue N172 coordinates Mn(2+). Residues 175–177, 189–191, and 194–195 contribute to the prenylated FMN site; these read IYR, RWL, and RG. E238 serves as a coordination point for Mn(2+). The Proton donor role is filled by D287.

Belongs to the UbiD family. Homohexamer. Prenylated FMN is required as a cofactor. Requires Mn(2+) as cofactor.

The protein resides in the cell membrane. The catalysed reaction is a 4-hydroxy-3-(all-trans-polyprenyl)benzoate + H(+) = a 2-(all-trans-polyprenyl)phenol + CO2. Its pathway is cofactor biosynthesis; ubiquinone biosynthesis. Functionally, catalyzes the decarboxylation of 3-octaprenyl-4-hydroxy benzoate to 2-octaprenylphenol, an intermediate step in ubiquinone biosynthesis. The chain is 3-octaprenyl-4-hydroxybenzoate carboxy-lyase from Nitrosococcus oceani (strain ATCC 19707 / BCRC 17464 / JCM 30415 / NCIMB 11848 / C-107).